The sequence spans 226 residues: PKHD-type hydroxylase AZC_3753 (226 aa).

The region spanning 78 to 178 is the Fe2OG dioxygenase domain; that stretch reads RILPPMFNRY…RVASFFWTQS (101 aa). Residues His96, Asp98, and His159 each coordinate Fe cation. 2-oxoglutarate is bound at residue Arg169.

Fe(2+) is required as a cofactor. L-ascorbate serves as cofactor.

The polypeptide is PKHD-type hydroxylase AZC_3753 (Azorhizobium caulinodans (strain ATCC 43989 / DSM 5975 / JCM 20966 / LMG 6465 / NBRC 14845 / NCIMB 13405 / ORS 571)).